A 229-amino-acid chain; its full sequence is Enolase-phosphatase E1 (229 aa).

It belongs to the HAD-like hydrolase superfamily. MasA/MtnC family. Monomer. The cofactor is Mg(2+).

It catalyses the reaction 5-methylsulfanyl-2,3-dioxopentyl phosphate + H2O = 1,2-dihydroxy-5-(methylsulfanyl)pent-1-en-3-one + phosphate. The protein operates within amino-acid biosynthesis; L-methionine biosynthesis via salvage pathway; L-methionine from S-methyl-5-thio-alpha-D-ribose 1-phosphate: step 3/6. It participates in amino-acid biosynthesis; L-methionine biosynthesis via salvage pathway; L-methionine from S-methyl-5-thio-alpha-D-ribose 1-phosphate: step 4/6. Bifunctional enzyme that catalyzes the enolization of 2,3-diketo-5-methylthiopentyl-1-phosphate (DK-MTP-1-P) into the intermediate 2-hydroxy-3-keto-5-methylthiopentenyl-1-phosphate (HK-MTPenyl-1-P), which is then dephosphorylated to form the acireductone 1,2-dihydroxy-3-keto-5-methylthiopentene (DHK-MTPene). This Yersinia enterocolitica serotype O:8 / biotype 1B (strain NCTC 13174 / 8081) protein is Enolase-phosphatase E1.